Reading from the N-terminus, the 442-residue chain is N-acetyl-S-alkylcysteine sulfoxide monooxygenase (442 aa).

Residues aspartate 58, threonine 95, histidine 145, tyrosine 149, serine 219, and serine 220 each coordinate FMN.

It belongs to the NtaA/SnaA/DszA monooxygenase family. Homodimer.

The enzyme catalyses (R)-N-acetyl-S-benzyl-L-cysteine sulfoxide + FMNH2 + O2 = N-acetyl-S-hydroxy-L-cysteine + benzaldehyde + FMN + H2O + H(+). The protein operates within amino-acid metabolism. Its function is as follows. Involved in a cysteine salvage pathway from S-alkylcysteine. Catalyzes the C-S bond cleavage in N-acetyl-S-benzyl-L-cysteine sulfoxide leading to N-acetyl-S-hydroxy-L-cysteine and benzaldehyde. This pathway is likely important in the catabolism of alkylated cysteine generated by proteolysis of alkylated glutathione formed in the detoxification of a wide range of electrophiles. Has much less efficient activity with N-acetyl-S-methyl-L-cysteine sulfoxide as substrate. Cannot use S-alkylated L-cysteine sulfones and ketone analogs as substrates, demonstrating that the sulfoxide is required for activity. This Bacillus subtilis (strain 168) protein is N-acetyl-S-alkylcysteine sulfoxide monooxygenase.